The sequence spans 328 residues: Adenosine receptor A1 (328 aa).

At 1 to 10 the chain is on the extracellular side; that stretch reads MPPSISAFQA. The chain crosses the membrane as a helical span at residues 11 to 33; that stretch reads AYIGIEVLIALVSVPGNVLVIWA. The Cytoplasmic portion of the chain corresponds to 34–46; that stretch reads VKVNQALRDATFC. A helical transmembrane segment spans residues 47–69; sequence FIVSLAVADVAVGALVIPLAILI. Residues 70-80 are Extracellular-facing; sequence NIGPETYFHTC. C80 and C169 are oxidised to a cystine. Residues 81–102 form a helical membrane-spanning segment; the sequence is LMVACPVLILTQSSILALLAIA. Over 103-123 the chain is Cytoplasmic; it reads VDRYLRVKIPLRYKAVVTPRR. The helical transmembrane segment at 124–146 threads the bilayer; sequence AAVAIAGCWILSLVVGLTPMFGW. Residues 147-176 lie on the Extracellular side of the membrane; the sequence is NNLREVQRAWAANGSVGEPVIKCEFEKVIS. An N-linked (GlcNAc...) asparagine glycan is attached at N159. Residues 177 to 201 traverse the membrane as a helical segment; that stretch reads MEYMVYFNFFVWVLPPLLLMVLIYL. At 202 to 235 the chain is on the cytoplasmic side; that stretch reads EVFYLIRRQLSKKASASSGDPHKYYGKELKIAKS. The helical transmembrane segment at 236 to 259 threads the bilayer; that stretch reads LALILFLFALSWLPLHILNCVTLF. At 260–267 the chain is on the extracellular side; it reads CPSCQKPS. Residues 268–292 form a helical membrane-spanning segment; the sequence is ILVYTAIFLTHGNSAMNPIVYAFRI. Topologically, residues 293–328 are cytoplasmic; sequence HKFRVTFLKIWNDHFRCRPAPAGDGDEDLPEEKPND. C309 carries the S-palmitoyl cysteine lipid modification.

Belongs to the G-protein coupled receptor 1 family.

The protein localises to the cell membrane. In terms of biological role, receptor for adenosine. The activity of this receptor is mediated by G proteins which inhibit adenylyl cyclase. The protein is Adenosine receptor A1 (ADORA1) of Oryctolagus cuniculus (Rabbit).